The sequence spans 215 residues: Cytochrome b6 (215 aa).

Residues isoleucine 32–phenylalanine 52 form a helical membrane-spanning segment. A heme c-binding site is contributed by cysteine 35. Heme b is bound by residues histidine 86 and histidine 100. The next 3 membrane-spanning stretches (helical) occupy residues alanine 90–phenylalanine 110, leucine 116–tyrosine 136, and alanine 186–isoleucine 206. 2 residues coordinate heme b: histidine 187 and histidine 202.

It belongs to the cytochrome b family. PetB subfamily. As to quaternary structure, the 4 large subunits of the cytochrome b6-f complex are cytochrome b6, subunit IV (17 kDa polypeptide, PetD), cytochrome f and the Rieske protein, while the 4 small subunits are PetG, PetL, PetM and PetN. The complex functions as a dimer. Requires heme b as cofactor. Heme c is required as a cofactor.

It is found in the plastid. It localises to the chloroplast thylakoid membrane. Component of the cytochrome b6-f complex, which mediates electron transfer between photosystem II (PSII) and photosystem I (PSI), cyclic electron flow around PSI, and state transitions. The protein is Cytochrome b6 of Trieres chinensis (Marine centric diatom).